The following is a 305-amino-acid chain: NAD kinase (305 aa).

The Proton acceptor role is filled by aspartate 82. Residues 82–83 (DG), 156–157 (ND), arginine 184, aspartate 186, 197–202 (TAYALS), alanine 221, and glutamine 255 contribute to the NAD(+) site.

It belongs to the NAD kinase family. The cofactor is a divalent metal cation.

The protein localises to the cytoplasm. The enzyme catalyses NAD(+) + ATP = ADP + NADP(+) + H(+). Functionally, involved in the regulation of the intracellular balance of NAD and NADP, and is a key enzyme in the biosynthesis of NADP. Catalyzes specifically the phosphorylation on 2'-hydroxyl of the adenosine moiety of NAD to yield NADP. This chain is NAD kinase, found in Cupriavidus pinatubonensis (strain JMP 134 / LMG 1197) (Cupriavidus necator (strain JMP 134)).